We begin with the raw amino-acid sequence, 441 residues long: RNA-binding protein BRN1 (441 aa).

2 consecutive RRM domains span residues 18-99 (VKLF…YADG) and 106-186 (HKLF…WADT). The span at 258–273 (QPNQGNNNALQGTSPD) shows a compositional bias: polar residues. Residues 258-282 (QPNQGNNNALQGTSPDSVPPRLARR) form a disordered region. In terms of domain architecture, RRM 3 spans 349–427 (ANLFIYNIPR…KKLKVQLKRD (79 aa)).

In terms of tissue distribution, highly expressed in stems and cauline leaves, and at lower levels in siliques, flowers, roots and rosette leaves.

Its subcellular location is the cytoplasm. Functionally, RNA-binding protein involved in the regulation of flowering time. Acts as a repressor of the activity of SOC1, a transcriptional activator of flowering time. Binds to the 3'-UTR of SOC1 mRNA in the cytoplasm and participates in SOC1 mRNA decay, mediated by the distal region of the SOC1 3'-UTR. Acts as a positive regulator of salicylic acid (SA)-mediated immunity. May act on SA signaling-related genes at a post-transcriptional level. This chain is RNA-binding protein BRN1, found in Arabidopsis thaliana (Mouse-ear cress).